Here is a 243-residue protein sequence, read N- to C-terminus: Complement C1q tumor necrosis factor-related protein 5 (243 aa).

Positions 1-15 are cleaved as a signal peptide; it reads MRPLLALLLLGLASG. The disordered stretch occupies residues 15–124; sequence GSPPLDDNKI…VPPPADTPLP (110 aa). Residues 30-95 enclose the Collagen-like domain; that stretch reads GQPGLPGTPG…AGPVGAIGPA (66 aa). The C1q domain occupies 99–238; it reads SVPPRSAFSA…GFLVYSDWHS (140 aa).

Homotrimer (via collagen-like domain). May form higher order oligomers by supercoiling of the trimers. May interact with ERFE.

It is found in the secreted. This is Complement C1q tumor necrosis factor-related protein 5 (C1qtnf5) from Rattus norvegicus (Rat).